The sequence spans 650 residues: DNA gyrase subunit B (650 aa).

A Toprim domain is found at 429–543; that stretch reads NELFIVEGDS…AGYVYIAQPP (115 aa). Residues Glu435, Asp508, and Asp510 each contribute to the Mg(2+) site.

It belongs to the type II topoisomerase GyrB family. As to quaternary structure, heterotetramer, composed of two GyrA and two GyrB chains. In the heterotetramer, GyrA contains the active site tyrosine that forms a transient covalent intermediate with DNA, while GyrB binds cofactors and catalyzes ATP hydrolysis. It depends on Mg(2+) as a cofactor. Mn(2+) serves as cofactor. Ca(2+) is required as a cofactor.

The protein resides in the cytoplasm. The enzyme catalyses ATP-dependent breakage, passage and rejoining of double-stranded DNA.. Its function is as follows. A type II topoisomerase that negatively supercoils closed circular double-stranded (ds) DNA in an ATP-dependent manner to modulate DNA topology and maintain chromosomes in an underwound state. Negative supercoiling favors strand separation, and DNA replication, transcription, recombination and repair, all of which involve strand separation. Also able to catalyze the interconversion of other topological isomers of dsDNA rings, including catenanes and knotted rings. Type II topoisomerases break and join 2 DNA strands simultaneously in an ATP-dependent manner. This is DNA gyrase subunit B from Streptococcus pyogenes serotype M1.